The primary structure comprises 249 residues: Tetrahydromethanopterin S-methyltransferase subunit A (249 aa).

The Cytoplasmic segment spans residues 1-227; that stretch reads MADKKEVIQN…KISSGYYAGK (227 aa). His84 lines the 5-hydroxybenzimidazolylcob(I)amide pocket. The helical transmembrane segment at 228–248 threads the bilayer; it reads IEGIVIGFILTLVFLIIIIQG. Leu249 is a topological domain (extracellular).

The protein belongs to the MtrA family. The complex is composed of 8 subunits; MtrA, MtrB, MtrC, MtrD, MtrE, MtrF, MtrG and MtrH. The cofactor is 5-hydroxybenzimidazolylcob(I)amide.

The protein resides in the cell membrane. It carries out the reaction 5-methyl-5,6,7,8-tetrahydromethanopterin + coenzyme M + 2 Na(+)(in) = 5,6,7,8-tetrahydromethanopterin + methyl-coenzyme M + 2 Na(+)(out). Its pathway is one-carbon metabolism; methanogenesis from CO(2); methyl-coenzyme M from 5,10-methylene-5,6,7,8-tetrahydromethanopterin: step 2/2. Its function is as follows. Part of a complex that catalyzes the formation of methyl-coenzyme M and tetrahydromethanopterin from coenzyme M and methyl-tetrahydromethanopterin. This is an energy-conserving, sodium-ion translocating step. The chain is Tetrahydromethanopterin S-methyltransferase subunit A from Methanosphaera stadtmanae (strain ATCC 43021 / DSM 3091 / JCM 11832 / MCB-3).